A 107-amino-acid polypeptide reads, in one-letter code: UPF0102 protein CTN_0433 (107 aa).

Belongs to the UPF0102 family.

The protein is UPF0102 protein CTN_0433 of Thermotoga neapolitana (strain ATCC 49049 / DSM 4359 / NBRC 107923 / NS-E).